We begin with the raw amino-acid sequence, 691 residues long: Glycine--tRNA ligase beta subunit (691 aa).

The protein belongs to the class-II aminoacyl-tRNA synthetase family. Tetramer of two alpha and two beta subunits.

It localises to the cytoplasm. It catalyses the reaction tRNA(Gly) + glycine + ATP = glycyl-tRNA(Gly) + AMP + diphosphate. The protein is Glycine--tRNA ligase beta subunit of Buchnera aphidicola subsp. Schizaphis graminum (strain Sg).